The sequence spans 89 residues: Small ribosomal subunit protein uS14 (89 aa).

The protein belongs to the universal ribosomal protein uS14 family. Part of the 30S ribosomal subunit. Contacts proteins S3 and S10.

Binds 16S rRNA, required for the assembly of 30S particles and may also be responsible for determining the conformation of the 16S rRNA at the A site. The sequence is that of Small ribosomal subunit protein uS14 from Porphyromonas gingivalis (strain ATCC 33277 / DSM 20709 / CIP 103683 / JCM 12257 / NCTC 11834 / 2561).